A 235-amino-acid polypeptide reads, in one-letter code: tRNA1(Val) (adenine(37)-N6)-methyltransferase (235 aa).

It belongs to the methyltransferase superfamily. tRNA (adenine-N(6)-)-methyltransferase family.

The protein localises to the cytoplasm. It catalyses the reaction adenosine(37) in tRNA1(Val) + S-adenosyl-L-methionine = N(6)-methyladenosine(37) in tRNA1(Val) + S-adenosyl-L-homocysteine + H(+). Functionally, specifically methylates the adenine in position 37 of tRNA(1)(Val) (anticodon cmo5UAC). The chain is tRNA1(Val) (adenine(37)-N6)-methyltransferase from Flavobacterium johnsoniae (strain ATCC 17061 / DSM 2064 / JCM 8514 / BCRC 14874 / CCUG 350202 / NBRC 14942 / NCIMB 11054 / UW101) (Cytophaga johnsonae).